A 73-amino-acid chain; its full sequence is Large ribosomal subunit protein bL31 (73 aa).

Belongs to the bacterial ribosomal protein bL31 family. Type A subfamily. Part of the 50S ribosomal subunit.

Binds the 23S rRNA. In Bartonella tribocorum (strain CIP 105476 / IBS 506), this protein is Large ribosomal subunit protein bL31.